Consider the following 299-residue polypeptide: NAD-dependent protein deacetylase 1 (299 aa).

The Deacetylase sirtuin-type domain occupies 15–292 (LPPGTTDLAP…TTVADRLGLR (278 aa)). Residues 39 to 59 (GAGI…GSLS) and 117 to 120 (QNVD) each bind NAD(+). Residue H135 is the Proton acceptor of the active site. Residues C143, C146, C194, and C197 each contribute to the Zn(2+) site. NAD(+) contacts are provided by residues 234 to 236 (GSS) and L278.

This sequence belongs to the sirtuin family. Class II subfamily. It depends on Zn(2+) as a cofactor.

The protein resides in the cytoplasm. The enzyme catalyses N(6)-acetyl-L-lysyl-[protein] + NAD(+) + H2O = 2''-O-acetyl-ADP-D-ribose + nicotinamide + L-lysyl-[protein]. Functionally, NAD-dependent protein deacetylase which modulates the activities of several enzymes which are inactive in their acetylated form. This is NAD-dependent protein deacetylase 1 from Streptomyces coelicolor (strain ATCC BAA-471 / A3(2) / M145).